Reading from the N-terminus, the 395-residue chain is G-protein coupled receptor 182 (395 aa).

Over 1 to 53 (MSVIPSSRPVSTLAPDNDFREIHNWTELLHLFNQTFSDCHMELNENTKQVVLF) the chain is Extracellular. N-linked (GlcNAc...) asparagine glycosylation is found at Asn24 and Asn33. A helical membrane pass occupies residues 54-75 (VFYLAIFVVGLVENVLVICVNC). The Cytoplasmic portion of the chain corresponds to 76–86 (RRSGRVGMLNL). Residues 87 to 109 (YILNMAVADLGIILSLPVWMLEV) traverse the membrane as a helical segment. Residues 110 to 123 (MLEYTWLWGSFSCR) are Extracellular-facing. Cys122 and Cys198 are oxidised to a cystine. The chain crosses the membrane as a helical span at residues 124–145 (FIHYFYLANMYSSIFFLTCLSI). Topologically, residues 146–166 (DRYVTLTNTSPSWQRHQHRIR) are cytoplasmic. Residues 167–189 (RAVCAGVWVLSAIIPLPEVVHIQ) traverse the membrane as a helical segment. Over 190–213 (LLDGSEPMCLFLAPFETYSAWALA) the chain is Extracellular. Residues 214–235 (VALSATILGFLLPFPLIAVFNI) traverse the membrane as a helical segment. At 236–254 (LSACRLRRQGQTESRRHCL) the chain is on the cytoplasmic side. Residues 255–276 (LMWAYIVVFVICWLPYHVTMLL) form a helical membrane-spanning segment. The Extracellular segment spans residues 277–295 (LTLHTTHIFLHCNLVNFLY). A helical transmembrane segment spans residues 296 to 316 (FFYEIIDCFSMLHCVANPILY). Over 317-395 (NFLSPSFRGR…RTPHLHSAIP (79 aa)) the chain is Cytoplasmic. Ser329 carries the post-translational modification Phosphoserine.

It belongs to the G-protein coupled receptor 1 family. In terms of tissue distribution, expressed in a wide variety of peripheral tissues in the adult rat with prominent expression in lung, testis, adrenal and liver.

Its subcellular location is the cell membrane. In terms of biological role, orphan receptor. In Rattus norvegicus (Rat), this protein is G-protein coupled receptor 182 (Gpr182).